The following is a 128-amino-acid chain: UPF0102 protein Rfer_3873 (128 aa).

The segment covering 1–15 has biased composition (polar residues); that stretch reads MAIPQIKTQVGTSKQ. Positions 1-20 are disordered; that stretch reads MAIPQIKTQVGTSKQAGDAA.

The protein belongs to the UPF0102 family.

The protein is UPF0102 protein Rfer_3873 of Albidiferax ferrireducens (strain ATCC BAA-621 / DSM 15236 / T118) (Rhodoferax ferrireducens).